A 2368-amino-acid chain; its full sequence is Voltage-dependent P/Q-type calcium channel subunit alpha-1A (2368 aa).

At 1 to 100 (MARFGDEMPG…KYAKKITEWP (100 aa)) the chain is on the cytoplasmic side. The I repeat unit spans residues 65 to 365 (NPIPVRQNCL…LVLGVLSGEF (301 aa)). The helical transmembrane segment at 101 to 119 (PFEYMILATIIANCIVLAL) threads the bilayer. Residues 120–138 (EQHLPDDDKTPMSERLDDT) lie on the Extracellular side of the membrane. The helical transmembrane segment at 139–156 (EPYFIGIFCFEAGIKIVA) threads the bilayer. Residues 157–168 (LGFAFHKGSYLR) lie on the Cytoplasmic side of the membrane. The helical transmembrane segment at 169-184 (NGWNVMDFVVVLTGIL) threads the bilayer. Over 185-192 (ATVGTEFD) the chain is Extracellular. A helical membrane pass occupies residues 193 to 211 (LRTLRAVRVLRPLKLVSGI). At 212–230 (PSLQVVLKSIMKAMIPLLQ) the chain is on the cytoplasmic side. Residues 231–250 (IGLLLFFAILIFAIIGLEFY) traverse the membrane as a helical segment. Residues 251–337 (MGKFHTTCFE…NSNDASGNTW (87 aa)) lie on the Extracellular side of the membrane. N-linked (GlcNAc...) asparagine glycosylation occurs at Asn285. Residue Glu320 participates in Ca(2+) binding. Residues 338–362 (NWLYFIPLIIIGSFFMLNLVLGVLS) traverse the membrane as a helical segment. The Cytoplasmic portion of the chain corresponds to 363–489 (GEFAKERERV…FYIRRMVKTQ (127 aa)). The segment at 385 to 402 (QQIERELNGYMEWISKAE) is binding to the beta subunit. At Thr411 the chain carries Phosphothreonine. 2 positions are modified to phosphoserine: Ser450 and Ser453. An II repeat occupies 475 to 719 (ERRMRFYIRR…VFLAIAVDNL (245 aa)). The chain crosses the membrane as a helical span at residues 490–509 (AFYWTVLSLVALNTLCVAIV). Topologically, residues 510–523 (HYNQPEWLSDFLYY) are extracellular. A helical transmembrane segment spans residues 524-543 (AEFIFLGLFMSEMFIKMYGL). Residues 544–551 (GTRPYFHS) lie on the Cytoplasmic side of the membrane. The chain crosses the membrane as a helical span at residues 552–570 (SFNCFDCGVIIGSIFEVIW). Over 571–580 (AVIKPGTSFG) the chain is Extracellular. The chain crosses the membrane as a helical span at residues 581–599 (ISVLRALRLLRIFKVTKYW). At 600-618 (ASLRNLVVSLLNSMKSIIS) the chain is on the cytoplasmic side. The helical transmembrane segment at 619–638 (LLFLLFLFIVVFALLGMQLF) threads the bilayer. The Extracellular segment spans residues 639 to 691 (GGQFNFDEGTPPTNFDTFPAAIMTVFQILTGEDWNEVMYDGIKSQGGVQGGMV). Ca(2+) is bound at residue Glu670. The chain crosses the membrane as a helical span at residues 692 to 716 (FSIYFIVLTLFGNYTLLNVFLAIAV). The Cytoplasmic portion of the chain corresponds to 717-1190 (DNLANAQELT…TNPLRRLCHY (474 aa)). Phosphoserine is present on residues Ser752 and Ser755. Residues 762-781 (AVKEQQKNQKPTKSVWEQRT) are disordered. The segment covering 769-779 (NQKPTKSVWEQ) has biased composition (polar residues). Position 792 is a phosphoserine (Ser792). 2 disordered regions span residues 823 to 1117 (PLVV…RKPE) and 1137 to 1170 (VNKNANPDPLPKKEEEKKEEEEADPGEDGPKPMP). Basic and acidic residues-rich tracts occupy residues 850 to 862 (RPRESARDPDARR), 871 to 924 (APGR…EGEP), and 932 to 958 (RPGDEPDDRPERRPRPRDATRPARAAD). Phosphoserine is present on residues Ser1038, Ser1042, and Ser1051. The segment covering 1056-1073 (GNSTNPGPALATNPQNAA) has biased composition (polar residues). The segment covering 1074 to 1083 (SRRTPNNPGN) has biased composition (low complexity). Over residues 1094–1111 (ENSLIVTNPSSTQPNSAK) the composition is skewed to polar residues. The segment covering 1153-1163 (KKEEEEADPGE) has biased composition (acidic residues). Residues 1182–1465 (NPLRRLCHYI…IFVALIIITF (284 aa)) form an III repeat. A helical membrane pass occupies residues 1191-1214 (ILNLRYFEMCILMVIAMSSIALAA). Over 1215–1231 (EDPVQPNAPRNNVLRYF) the chain is Extracellular. Residues 1232 to 1251 (DYVFTGVFTFEMVIKMIDLG) traverse the membrane as a helical segment. Over 1252–1258 (LVLHQGA) the chain is Cytoplasmic. The helical transmembrane segment at 1259–1282 (YFRDLWNILDFIVVSGALVAFAFT) threads the bilayer. Topologically, residues 1283–1293 (GNSKGKDINTI) are extracellular. A helical transmembrane segment spans residues 1294–1311 (KSLRVLRVLRPLKTIKRL). The Cytoplasmic portion of the chain corresponds to 1312–1330 (PKLKAVFDCVVNSLKNVFN). Residues 1331 to 1350 (ILIVYMLFMFIFAVVAVQLF) form a helical membrane-spanning segment. Over 1351–1437 (KGKFFHCTDE…QGPSPGYRME (87 aa)) the chain is Extracellular. Glu1411 contacts Ca(2+). A helical transmembrane segment spans residues 1438–1462 (MSIFYVVYFVVFPFFFVNIFVALII). Topologically, residues 1463–1518 (ITFQEQGDKMMEEYSLEKNERACIDFAISAKPLTRHMPQNKQSFQYRMWQFVVSPP) are cytoplasmic. Residues 1502–1765 (NKQSFQYRMW…LFVAVIMDNF (264 aa)) form an IV repeat. A helical membrane pass occupies residues 1519 to 1537 (FEYTIMAMIALNTIVLMMK). Over 1538 to 1551 (FYGASVAYENALRV) the chain is Extracellular. The helical transmembrane segment at 1552-1573 (FNIVFTSLFSLECVLKVMAFGI) threads the bilayer. Topologically, residues 1574–1580 (LNYFRDA) are cytoplasmic. A helical transmembrane segment spans residues 1581-1600 (WNIFDFVTVLGSITDILVTE). Over 1601 to 1607 (FGNNFIN) the chain is Extracellular. An N-linked (GlcNAc...) asparagine glycan is attached at Asn1607. The chain crosses the membrane as a helical span at residues 1608 to 1626 (LSFLRLFRAARLIKLLRQG). Topologically, residues 1627 to 1645 (YTIRILLWTFVQSFKALPY) are cytoplasmic. Residues 1646 to 1665 (VCLLIAMLFFIYAIIGMQVF) form a helical membrane-spanning segment. Residues 1666 to 1737 (GNIGIDGEDE…ILTADCGNEF (72 aa)) lie on the Extracellular side of the membrane. A helical membrane pass occupies residues 1738-1763 (AYFYFVSFIFLCSFLMLNLFVAVIMD). The Cytoplasmic segment spans residues 1764–2368 (NFEYLTRDSS…AYSESEDDWC (605 aa)). Thr1935 carries the phosphothreonine modification. The segment at 1940 to 2368 (QRMEPPSPTQ…AYSESEDDWC (429 aa)) is disordered. Composition is skewed to polar residues over residues 1948–1963 (TQEGGPSQNALPSTQL) and 1981–1997 (SWVTQRAQEMFQKTGTW). Phosphoserine occurs at positions 1998, 2016, 2028, 2030, 2071, and 2091. The span at 2008 to 2017 (PNSQPNSQSV) shows a compositional bias: polar residues. The span at 2018–2034 (EMREMGTDGYSDSEHYL) shows a compositional bias: basic and acidic residues. Residues 2063-2073 (DLSTISDTSPM) are compositionally biased toward polar residues. Composition is skewed to basic and acidic residues over residues 2085–2102 (RRLDDYSLERVPPEENQR) and 2143–2153 (PSKDRDQDRGR). Positions 2154 to 2172 (PKDRKHRPHHHHHHHHHHP) are enriched in basic residues. A compositionally biased stretch (basic and acidic residues) spans 2173–2209 (PAPDRDRYAQERPDTGRARAREQRWSRSPSEGREHTT). A compositionally biased stretch (low complexity) spans 2213–2231 (GSSSVSGSPAPSTSGTSTP). Residues 2289–2305 (EGPRPRGADYTEPDSPR) show a composition bias toward basic and acidic residues.

Belongs to the calcium channel alpha-1 subunit (TC 1.A.1.11) family. CACNA1A subfamily. As to quaternary structure, voltage-dependent calcium channels are multisubunit complexes, consisting of alpha-1, alpha-2, beta and delta subunits in a 1:1:1:1 ratio. The channel activity is directed by the pore-forming and voltage-sensitive alpha-1 subunit. In many cases, this subunit is sufficient to generate voltage-sensitive calcium channel activity. The auxiliary subunits beta and alpha-2/delta linked by a disulfide bridge regulate the channel activity. Interacts with CABP1. Interacts with the spider omega-agatoxin-IVA (AC P30288). Interacts with TSPOAP1. In terms of tissue distribution, brain specific; mainly found in the cerebellum, olfactory bulb, cerebral cortex, hippocampus, and inferior colliculus. In the hippocampus, expression occurs in pyramidal and granule neurons, as well as in interneurons. Purkinje cells contain predominantly P-type VSCC, the Q-type being a prominent calcium current in cerebellar granule cells.

It is found in the cell membrane. It catalyses the reaction Ca(2+)(in) = Ca(2+)(out). In terms of biological role, voltage-sensitive calcium channels (VSCC) mediate the entry of calcium ions into excitable cells and are also involved in a variety of calcium-dependent processes, including muscle contraction, hormone or neurotransmitter release, gene expression, cell motility, cell division and cell death. The isoform alpha-1A gives rise to P and/or Q-type calcium currents. P/Q-type calcium channels belong to the 'high-voltage activated' (HVA) group and are specifically blocked by the spider omega-agatoxin-IVA (AC P54282). They are however insensitive to dihydropyridines (DHP). The polypeptide is Voltage-dependent P/Q-type calcium channel subunit alpha-1A (Mus musculus (Mouse)).